Here is a 400-residue protein sequence, read N- to C-terminus: N(alpha)-acyl-glutamine aminoacylase (400 aa).

This sequence belongs to the peptidase M20 family. Zn(2+) is required as a cofactor.

It catalyses the reaction an N(2)-acyl-L-glutamine + H2O = a carboxylate + L-glutamine. The enzyme catalyses N(2)-[(2E)-3-methylhex-2-enoyl]-L-glutaminate + H2O = (2E)-3-methylhex-2-enoate + L-glutamine. The catalysed reaction is N(2)-(3-hydroxy-3-methylhexanoyl)-L-glutaminate + H2O = 3-hydroxy-3-methylhexanoate + L-glutamine. Its activity is regulated as follows. Partial loss of activity with the combination Mn(2+) and chelating agents. Activity is lost in presence of 0.5 mM dithiothreitol. In terms of biological role, hydrolyzes odorless N-alpha-acyl-L-glutamine conjugates of short- and medium-chain fatty acids, releasing human axillary malodor compounds. The enzyme is highly specific for the glutamine residue but has a low specificity for the acyl part of the substrate. The two most common products are 3-methyl-2-hexenoic acid (3M2H) and 3-hydroxy-3-methyl-hexanoic acid (HMHA), which are produced from the odorless precursors N-alpha-3-methyl-2-hexenoyl-L-glutamine (3M2H-Gln) and N-alpha-3-hydroxy-3-methylhexanoyl-L-glutamine (HMHA-Gln). In addition, over 28 different carboxylic acids contributing to human body odor are released by this enzyme from odorless axilla secretions, including several aliphatic 3-hydroxy acids with 4-Me branches, 3,4-unsaturated, 4-Et-branched aliphatic acids, and a variety of degradation products of amino acids. This is N(alpha)-acyl-glutamine aminoacylase from Corynebacterium striatum.